The sequence spans 343 residues: Phosphoribosylformylglycinamidine cyclo-ligase (343 aa).

This sequence belongs to the AIR synthase family.

The protein resides in the cytoplasm. The catalysed reaction is 2-formamido-N(1)-(5-O-phospho-beta-D-ribosyl)acetamidine + ATP = 5-amino-1-(5-phospho-beta-D-ribosyl)imidazole + ADP + phosphate + H(+). Its pathway is purine metabolism; IMP biosynthesis via de novo pathway; 5-amino-1-(5-phospho-D-ribosyl)imidazole from N(2)-formyl-N(1)-(5-phospho-D-ribosyl)glycinamide: step 2/2. This chain is Phosphoribosylformylglycinamidine cyclo-ligase, found in Parasynechococcus marenigrum (strain WH8102).